Consider the following 333-residue polypeptide: Fructose-1,6-bisphosphatase class 1 (333 aa).

Mg(2+)-binding residues include Glu92, Asp113, Leu115, and Asp116. Residues 116–119 (DGSS), Asn209, Tyr242, and Lys272 each bind substrate. Glu278 serves as a coordination point for Mg(2+).

The protein belongs to the FBPase class 1 family. Homotetramer. The cofactor is Mg(2+).

The protein resides in the cytoplasm. The catalysed reaction is beta-D-fructose 1,6-bisphosphate + H2O = beta-D-fructose 6-phosphate + phosphate. It participates in carbohydrate biosynthesis; Calvin cycle. The protein is Fructose-1,6-bisphosphatase class 1 of Pelodictyon phaeoclathratiforme (strain DSM 5477 / BU-1).